Here is an 864-residue protein sequence, read N- to C-terminus: 3-O-alpha-D-mannopyranosyl-alpha-D-mannopyranose xylosylphosphotransferase (864 aa).

Positions 1 to 66 (MPSTALSPPS…VPPRSPSRKI (66 aa)) are disordered. Residues 1–82 (MPSTALSPPS…HIRPHITPRT (82 aa)) are Cytoplasmic-facing. Low complexity-rich tracts occupy residues 16–29 (SYDSYSSSLSPSSP) and 42–52 (SPSPSRLESLL). A helical membrane pass occupies residues 83-103 (LTPVFLWTLALWLIHHFLFPL). Over 104 to 864 (SSPFAKLAKP…WDPVKDRYND (761 aa)) the chain is Lumenal. N200, N301, and N583 each carry an N-linked (GlcNAc...) asparagine glycan.

The protein belongs to the XPT1 family. Requires Mn(2+) as cofactor.

The protein localises to the golgi apparatus membrane. It catalyses the reaction 3-alpha-D-mannopyranosyl-alpha-D-mannopyranose + UDP-alpha-D-xylose = 3-O-(6-O-alpha-D-xylosylphospho-alpha-D-mannopyranosyl)-alpha-D-mannopyranose + UMP + H(+). Functionally, xylosylphosphotransferase that is specific for UDP-xylose as a donor and mannose as an acceptor to form a xylose-alpha-1-phosphate-6-mannose linkage. Functions in the O-glycosylation of proteins en route through the secretory pathway. The chain is 3-O-alpha-D-mannopyranosyl-alpha-D-mannopyranose xylosylphosphotransferase (XPT1) from Cryptococcus neoformans var. grubii (Filobasidiella neoformans var. grubii).